Consider the following 482-residue polypeptide: Putative alpha-L-fucosidase (482 aa).

An N-terminal signal peptide occupies residues 1-16 (MIFLIFSILFLHLANC). 4 N-linked (GlcNAc...) asparagine glycosylation sites follow: Asn182, Asn343, Asn359, and Asn419.

This sequence belongs to the glycosyl hydrolase 29 family.

It carries out the reaction an alpha-L-fucoside + H2O = L-fucose + an alcohol. Functionally, alpha-L-fucosidase is responsible for hydrolyzing the alpha-1,6-linked fucose joined to the reducing-end N-acetylglucosamine of the carbohydrate moieties of glycoproteins. This Caenorhabditis elegans protein is Putative alpha-L-fucosidase.